Here is a 447-residue protein sequence, read N- to C-terminus: 2-oxoadipate dioxygenase/decarboxylase (447 aa).

2-oxoadipate-binding residues include H68, R72, and H224. H68 contributes to the Fe(2+) binding site. 2 residues coordinate Fe(2+): H224 and E290. Position 391 (V391) interacts with 2-oxoadipate.

It belongs to the 2-oxoadipate dioxygenase/decarboxylase family. It depends on Fe(2+) as a cofactor.

The enzyme catalyses 2-oxoadipate + O2 = (R)-2-hydroxyglutarate + CO2. Catalyzes the decarboxylation and hydroxylation of 2-oxoadipate (2OA) to form D-2-hydroxyglutarate (D-2-HGA). The polypeptide is 2-oxoadipate dioxygenase/decarboxylase (ydcJ) (Escherichia coli (strain K12)).